Reading from the N-terminus, the 419-residue chain is Protein-lysine N-methyltransferase EFM2 (419 aa).

S-adenosyl-L-methionine is bound by residues Trp-222, 261-263, Asp-290, Trp-318, and Ala-340; that span reads GAG.

This sequence belongs to the class I-like SAM-binding methyltransferase superfamily. METTL21 family.

Its subcellular location is the cytoplasm. S-adenosyl-L-methionine-dependent protein-lysine N-methyltransferase that mono- and dimethylates elongation factor 2 (EFT1/EFT2) at 'Lys-613' and methylates elongation factor 3A (YEF3). This chain is Protein-lysine N-methyltransferase EFM2, found in Saccharomyces cerevisiae (strain ATCC 204508 / S288c) (Baker's yeast).